The chain runs to 453 residues: MELLNKKILVVGLARTGVAVARFLAARGARVTVTDMKDEAALAPLMEQLADLDIDYELGRHERHSFLMADLVVVSPGVPMDIKPLLLAKAQRRTVISEIELAARFLTAPLVAITGTNGKTTTTTLTGEIFAACGFKTFVGGNIGNPLIELVTSGEAVDRVVVELSSFQLEGIIDFRPQVAVLLNITEDHLDRYATYQEYIDAKLRIFENQTSADYAVLNMDDPLVAAYAGKMKARVVPTSQRQELAQGIFYRNGSIVYRWEGREELFATASFRLKGVHNIDNIMAALASTLLMGCDAGQALAALEAFAGLPHRMEFVREVNGVAWYEDSKGTNVGSVVKSLESFDSGITLIAGGKDKGGEYTPLAGLVKERVGHLILIGEAKERMCNALGSLTDTHLADTLEDAVALAHRLTSPGGVVLFSPACSSFDMFKNYEERGECFKSLVRSLDDGAGR.

Residue glycine 115–threonine 121 coordinates ATP.

The protein belongs to the MurCDEF family.

The protein resides in the cytoplasm. The enzyme catalyses UDP-N-acetyl-alpha-D-muramoyl-L-alanine + D-glutamate + ATP = UDP-N-acetyl-alpha-D-muramoyl-L-alanyl-D-glutamate + ADP + phosphate + H(+). It functions in the pathway cell wall biogenesis; peptidoglycan biosynthesis. In terms of biological role, cell wall formation. Catalyzes the addition of glutamate to the nucleotide precursor UDP-N-acetylmuramoyl-L-alanine (UMA). This chain is UDP-N-acetylmuramoylalanine--D-glutamate ligase, found in Geotalea uraniireducens (strain Rf4) (Geobacter uraniireducens).